The following is a 107-amino-acid chain: uncharacterized protein (107 aa).

Residues 1 to 4 (MSLV) lie on the Cytoplasmic side of the membrane. The chain crosses the membrane as a helical span at residues 5 to 25 (IDIADTIVSLTALIGLIITLI). Over 26–107 (KFHSQNKEDA…ELCRSSDRSK (82 aa)) the chain is Extracellular.

It is found in the host membrane. This is an uncharacterized protein from Acidianus sp. F28 (AFV-2).